We begin with the raw amino-acid sequence, 214 residues long: Shikimate kinase (214 aa).

Residue 35–40 (GAGKST) coordinates ATP. S39 is a binding site for Mg(2+). Substrate contacts are provided by D57, R81, and G103. R141 is a binding site for ATP. Residue R160 coordinates substrate.

This sequence belongs to the shikimate kinase family. As to quaternary structure, monomer. Mg(2+) is required as a cofactor.

The protein localises to the cytoplasm. It catalyses the reaction shikimate + ATP = 3-phosphoshikimate + ADP + H(+). Its pathway is metabolic intermediate biosynthesis; chorismate biosynthesis; chorismate from D-erythrose 4-phosphate and phosphoenolpyruvate: step 5/7. Functionally, catalyzes the specific phosphorylation of the 3-hydroxyl group of shikimic acid using ATP as a cosubstrate. The sequence is that of Shikimate kinase from Nitrobacter winogradskyi (strain ATCC 25391 / DSM 10237 / CIP 104748 / NCIMB 11846 / Nb-255).